The following is a 245-amino-acid chain: Eukaryotic translation initiation factor 6 (245 aa).

Belongs to the eIF-6 family. Monomer. Associates with the 60S ribosomal subunit.

The protein localises to the cytoplasm. It localises to the nucleus. The protein resides in the nucleolus. Functionally, binds to the 60S ribosomal subunit and prevents its association with the 40S ribosomal subunit to form the 80S initiation complex in the cytoplasm. May also be involved in ribosome biogenesis. The protein is Eukaryotic translation initiation factor 6 (eif6) of Xenopus laevis (African clawed frog).